Here is a 128-residue protein sequence, read N- to C-terminus: Putative pre-16S rRNA nuclease (128 aa).

Belongs to the YqgF nuclease family.

It localises to the cytoplasm. Functionally, could be a nuclease involved in processing of the 5'-end of pre-16S rRNA. This Sulfurovum sp. (strain NBC37-1) protein is Putative pre-16S rRNA nuclease.